Here is a 427-residue protein sequence, read N- to C-terminus: 3-phosphoshikimate 1-carboxyvinyltransferase (427 aa).

3-phosphoshikimate is bound by residues Lys22, Ser23, and Arg27. Residue Lys22 coordinates phosphoenolpyruvate. The phosphoenolpyruvate site is built by Gly96 and Arg124. 3-phosphoshikimate contacts are provided by Ser169, Ser170, Gln171, Ser197, Asp313, Asn336, and Lys340. Gln171 serves as a coordination point for phosphoenolpyruvate. The active-site Proton acceptor is the Asp313. Residues Arg344, Arg386, and Lys411 each contribute to the phosphoenolpyruvate site.

It belongs to the EPSP synthase family. Monomer.

Its subcellular location is the cytoplasm. It catalyses the reaction 3-phosphoshikimate + phosphoenolpyruvate = 5-O-(1-carboxyvinyl)-3-phosphoshikimate + phosphate. Its pathway is metabolic intermediate biosynthesis; chorismate biosynthesis; chorismate from D-erythrose 4-phosphate and phosphoenolpyruvate: step 6/7. In terms of biological role, catalyzes the transfer of the enolpyruvyl moiety of phosphoenolpyruvate (PEP) to the 5-hydroxyl of shikimate-3-phosphate (S3P) to produce enolpyruvyl shikimate-3-phosphate and inorganic phosphate. This is 3-phosphoshikimate 1-carboxyvinyltransferase from Escherichia coli O1:K1 / APEC.